The following is a 266-amino-acid chain: HLA class II histocompatibility antigen, DR beta 4 chain (266 aa).

A signal peptide spans methionine 1 to alanine 29. The interval glycine 30–valine 124 is beta-1. Topologically, residues glycine 30–lysine 227 are extracellular. Cystine bridges form between cysteine 44/cysteine 108 and cysteine 146/cysteine 202. Asparagine 48 carries N-linked (GlcNAc...) asparagine glycosylation. The segment at glutamine 125–lysine 227 is beta-2. The Ig-like C1-type domain occupies proline 126–glutamine 216. Residues methionine 228–phenylalanine 250 form a helical membrane-spanning segment. Residues arginine 251–serine 266 are Cytoplasmic-facing. Lysine 254 participates in a covalent cross-link: Glycyl lysine isopeptide (Lys-Gly) (interchain with G-Cter in ubiquitin).

This sequence belongs to the MHC class II family. In terms of assembly, heterodimer of an alpha and a beta subunit; also referred as MHC class II molecule. In the endoplasmic reticulum (ER) it forms a heterononamer; 3 MHC class II molecules bind to a CD74 homotrimer (also known as invariant chain or HLA class II histocompatibility antigen gamma chain). In the endosomal/lysosomal system; CD74 undergoes sequential degradation by various proteases; leaving a small fragment termed CLIP on each MHC class II molecule. MHC class II molecule interacts with HLA_DM, and HLA_DO in B-cells, in order to release CLIP and facilitate the binding of antigenic peptides. Ubiquitinated by MARCH1 and MARCH8 at Lys-254 leading to sorting into the endosome system and down-regulation of MHC class II. When associated with ubiquitination of the alpha subunit of HLA-DR: HLA-DRA 'Lys-244', the down-regulation of MHC class II may be highly effective.

It localises to the cell membrane. Its subcellular location is the endoplasmic reticulum membrane. The protein resides in the golgi apparatus. The protein localises to the trans-Golgi network membrane. It is found in the endosome membrane. It localises to the lysosome membrane. Its subcellular location is the late endosome membrane. Its function is as follows. Binds peptides derived from antigens that access the endocytic route of antigen presenting cells (APC) and presents them on the cell surface for recognition by the CD4 T-cells. The peptide binding cleft accommodates peptides of 10-30 residues. The peptides presented by MHC class II molecules are generated mostly by degradation of proteins that access the endocytic route, where they are processed by lysosomal proteases and other hydrolases. Exogenous antigens that have been endocytosed by the APC are thus readily available for presentation via MHC II molecules, and for this reason this antigen presentation pathway is usually referred to as exogenous. As membrane proteins on their way to degradation in lysosomes as part of their normal turn-over are also contained in the endosomal/lysosomal compartments, exogenous antigens must compete with those derived from endogenous components. Autophagy is also a source of endogenous peptides, autophagosomes constitutively fuse with MHC class II loading compartments. In addition to APCs, other cells of the gastrointestinal tract, such as epithelial cells, express MHC class II molecules and CD74 and act as APCs, which is an unusual trait of the GI tract. To produce a MHC class II molecule that presents an antigen, three MHC class II molecules (heterodimers of an alpha and a beta chain) associate with a CD74 trimer in the ER to form a heterononamer. Soon after the entry of this complex into the endosomal/lysosomal system where antigen processing occurs, CD74 undergoes a sequential degradation by various proteases, including CTSS and CTSL, leaving a small fragment termed CLIP (class-II-associated invariant chain peptide). The removal of CLIP is facilitated by HLA-DM via direct binding to the alpha-beta-CLIP complex so that CLIP is released. HLA-DM stabilizes MHC class II molecules until primary high affinity antigenic peptides are bound. The MHC II molecule bound to a peptide is then transported to the cell membrane surface. In B-cells, the interaction between HLA-DM and MHC class II molecules is regulated by HLA-DO. Primary dendritic cells (DCs) also to express HLA-DO. Lysosomal microenvironment has been implicated in the regulation of antigen loading into MHC II molecules, increased acidification produces increased proteolysis and efficient peptide loading. The sequence is that of HLA class II histocompatibility antigen, DR beta 4 chain (HLA-DRB4) from Homo sapiens (Human).